Here is a 509-residue protein sequence, read N- to C-terminus: Monocarboxylate transporter 9 (509 aa).

Residues 1–12 (MELKKSPDGGWG) lie on the Cytoplasmic side of the membrane. Transmembrane regions (helical) follow at residues 13–33 (WVIVFVSFFTQFLCYGSPLAV), 53–73 (WVGSLASGVGLLASPVCSLCV), 80–100 (PVTIFSGFMVAGGLMLSSFAP), 102–122 (IYFLFFSYGIVVGLGCGLLYT), 137–157 (GLALGLISTGSSVGLFIYAAL), 164–184 (FYGLDGCLLIVGALALNILAC), 305–325 (VFSALFIAILLFDIGGFPPSL), 342–362 (IMPLISIIGIMTAVGKLLLGI), 372–392 (LYLYVATLIIMGLALCAIPFA), 398–418 (LALLSGILGFLTGNWSIFPYV), 433–453 (GILMFFAGLGNSLGPPIVGWF), and 462–482 (IAFYFSGFCVLLGGFILLLAA). The Cytoplasmic segment spans residues 483-509 (LPSWDTCNKQLPKPAPTTFLYKVASNV).

This sequence belongs to the major facilitator superfamily. Monocarboxylate porter (TC 2.A.1.13) family.

Its subcellular location is the cell membrane. It carries out the reaction creatine(in) = creatine(out). The enzyme catalyses (R)-carnitine(in) = (R)-carnitine(out). In terms of biological role, extracellular pH-and Na(+)-sensitive low-affinity creatine transporter. Also functions as a pH-independent carnitine efflux transporter. This chain is Monocarboxylate transporter 9 (SLC16A9), found in Pongo abelii (Sumatran orangutan).